A 403-amino-acid polypeptide reads, in one-letter code: Acetylornithine aminotransferase (403 aa).

Pyridoxal 5'-phosphate contacts are provided by residues 101–102 (GA) and F134. R137 contacts N(2)-acetyl-L-ornithine. Pyridoxal 5'-phosphate is bound at residue 219 to 222 (DEVQ). An N6-(pyridoxal phosphate)lysine modification is found at K248. T276 lines the N(2)-acetyl-L-ornithine pocket. Pyridoxal 5'-phosphate is bound at residue T277.

Belongs to the class-III pyridoxal-phosphate-dependent aminotransferase family. ArgD subfamily. In terms of assembly, homodimer. The cofactor is pyridoxal 5'-phosphate.

It localises to the cytoplasm. It carries out the reaction N(2)-acetyl-L-ornithine + 2-oxoglutarate = N-acetyl-L-glutamate 5-semialdehyde + L-glutamate. It functions in the pathway amino-acid biosynthesis; L-arginine biosynthesis; N(2)-acetyl-L-ornithine from L-glutamate: step 4/4. This is Acetylornithine aminotransferase from Brucella melitensis biotype 1 (strain ATCC 23456 / CCUG 17765 / NCTC 10094 / 16M).